Reading from the N-terminus, the 496-residue chain is Aspartyl/glutamyl-tRNA(Asn/Gln) amidotransferase subunit B (496 aa).

Residues 475-496 (TGGSADPSKVNTLLREQLEDKK) form a disordered region.

Belongs to the GatB/GatE family. GatB subfamily. Heterotrimer of A, B and C subunits.

It catalyses the reaction L-glutamyl-tRNA(Gln) + L-glutamine + ATP + H2O = L-glutaminyl-tRNA(Gln) + L-glutamate + ADP + phosphate + H(+). The enzyme catalyses L-aspartyl-tRNA(Asn) + L-glutamine + ATP + H2O = L-asparaginyl-tRNA(Asn) + L-glutamate + ADP + phosphate + 2 H(+). Allows the formation of correctly charged Asn-tRNA(Asn) or Gln-tRNA(Gln) through the transamidation of misacylated Asp-tRNA(Asn) or Glu-tRNA(Gln) in organisms which lack either or both of asparaginyl-tRNA or glutaminyl-tRNA synthetases. The reaction takes place in the presence of glutamine and ATP through an activated phospho-Asp-tRNA(Asn) or phospho-Glu-tRNA(Gln). The protein is Aspartyl/glutamyl-tRNA(Asn/Gln) amidotransferase subunit B of Haloquadratum walsbyi (strain DSM 16790 / HBSQ001).